We begin with the raw amino-acid sequence, 448 residues long: tRNA-2-methylthio-N(6)-dimethylallyladenosine synthase (448 aa).

The MTTase N-terminal domain maps to 7–123 (RSFYIHTFGC…LPALIGDAEE (117 aa)). [4Fe-4S] cluster-binding residues include Cys16, Cys52, Cys86, Cys159, Cys163, and Cys166. The Radical SAM core domain maps to 145 to 375 (REVGVGAFVP…IDLQLSISAE (231 aa)). The TRAM domain occupies 378-441 (QEAVGSVVDV…SATLTGVNQG (64 aa)).

This sequence belongs to the methylthiotransferase family. MiaB subfamily. As to quaternary structure, monomer. Requires [4Fe-4S] cluster as cofactor.

It is found in the cytoplasm. It carries out the reaction N(6)-dimethylallyladenosine(37) in tRNA + (sulfur carrier)-SH + AH2 + 2 S-adenosyl-L-methionine = 2-methylsulfanyl-N(6)-dimethylallyladenosine(37) in tRNA + (sulfur carrier)-H + 5'-deoxyadenosine + L-methionine + A + S-adenosyl-L-homocysteine + 2 H(+). Its function is as follows. Catalyzes the methylthiolation of N6-(dimethylallyl)adenosine (i(6)A), leading to the formation of 2-methylthio-N6-(dimethylallyl)adenosine (ms(2)i(6)A) at position 37 in tRNAs that read codons beginning with uridine. This is tRNA-2-methylthio-N(6)-dimethylallyladenosine synthase from Chlorobium phaeovibrioides (strain DSM 265 / 1930) (Prosthecochloris vibrioformis (strain DSM 265)).